The sequence spans 389 residues: (+)-bicyclogermacrene synthase TS4 (389 aa).

Mg(2+) is bound by residues Asp136, Glu140, His284, Gly288, and Asp292. The DDxx(x)D/E motif signature appears at 136–140 (DEVCE). The NDxxSxxxD/E motif signature appears at 284 to 292 (HDFIGLQKD).

This sequence belongs to the terpene synthase family.

The catalysed reaction is (2E,6E)-farnesyl diphosphate = bicyclogermacrene + diphosphate. Catalyzes the cyclization of trans,trans-farnesyl diphosphate (FPP) to the bicyclic sesquiterpene bicyclogermacrene. The protein is (+)-bicyclogermacrene synthase TS4 of Penicillium expansum (Blue mold rot fungus).